A 634-amino-acid polypeptide reads, in one-letter code: ATP-dependent zinc metalloprotease FtsH (634 aa).

Residues 1-5 (MNALK) lie on the Cytoplasmic side of the membrane. The chain crosses the membrane as a helical span at residues 6-26 (NFFIWAIIIGAAIVAFNLFEG). The Periplasmic segment spans residues 27 to 100 (KREFTTKVSL…VANPEPPGGW (74 aa)). Residues 101-121 (LVNVFLSWLPILFFIGIWIFL) form a helical membrane-spanning segment. The Cytoplasmic portion of the chain corresponds to 122–634 (LRQMSGGGNV…KSEEVKEEVV (513 aa)). 195 to 202 (GEPGVGKT) contributes to the ATP binding site. Residue histidine 418 coordinates Zn(2+). Glutamate 419 is an active-site residue. Zn(2+) is bound by residues histidine 422 and aspartate 496. The tract at residues 615-634 (DRKSEENKELKSEEVKEEVV) is disordered.

In the central section; belongs to the AAA ATPase family. It in the C-terminal section; belongs to the peptidase M41 family. In terms of assembly, the isolated protease domain (residues 405-634) forms a stable hexamer. Requires Zn(2+) as cofactor.

The protein resides in the cell inner membrane. Its function is as follows. Acts as a processive, ATP-dependent zinc metallopeptidase for both cytoplasmic and membrane proteins. Plays a role in the quality control of integral membrane proteins. The polypeptide is ATP-dependent zinc metalloprotease FtsH (Aquifex aeolicus (strain VF5)).